A 365-amino-acid chain; its full sequence is Spermidine/putrescine import ATP-binding protein PotA (365 aa).

One can recognise an ABC transporter domain in the interval 9–239 (IRLTNVTKSY…PINHFVANFI (231 aa)). Position 41–48 (41–48 (GPSGCGKT)) interacts with ATP.

The protein belongs to the ABC transporter superfamily. Spermidine/putrescine importer (TC 3.A.1.11.1) family. The complex is composed of two ATP-binding proteins (PotA), two transmembrane proteins (PotB and PotC) and a solute-binding protein (PotD).

The protein resides in the cell membrane. It catalyses the reaction ATP + H2O + polyamine-[polyamine-binding protein]Side 1 = ADP + phosphate + polyamineSide 2 + [polyamine-binding protein]Side 1.. Its function is as follows. Part of the ABC transporter complex PotABCD involved in spermidine/putrescine import. Responsible for energy coupling to the transport system. This Lactiplantibacillus plantarum (strain ATCC BAA-793 / NCIMB 8826 / WCFS1) (Lactobacillus plantarum) protein is Spermidine/putrescine import ATP-binding protein PotA.